A 416-amino-acid chain; its full sequence is Sulfoquinovosyl glycerol-binding protein SmoF (416 aa).

An N-terminal signal peptide occupies residues 1 to 29 (MTLKTIRGKALMGAALCATMLTFSGQAFA). Q40 lines the 3-(6-sulfo-alpha-D-quinovosyl)glycerol pocket. H41 contributes to the 6-sulfo-D-quinovose binding site. 3-(6-sulfo-alpha-D-quinovosyl)glycerol-binding residues include S71, D95, D141, G194, T248, G303, W304, and R373. 6-sulfo-D-quinovose is bound by residues G303, W304, and R373.

It belongs to the bacterial solute-binding protein 1 family. The complex is probably composed of two ATP-binding proteins (SmoE), two transmembrane proteins (SmoG and SmoH) and a solute-binding protein (SmoF).

The protein localises to the periplasm. Its function is as follows. Part of the ABC transporter complex SmoEFGH involved in sulfoquinovosyl glycerol (SQGro) uptake. Binds sulfoquinovosyl glycerol (SQGro). Can also bind sulfoquinovose (SQ), methyl alpha-sulfoquinovoside (SQMe) and a short-chain derivative of sulfoquinovosyl diacylglycerol (SQDG). Cannot bind D-glucose and D-glucuronic acid. In Agrobacterium fabrum (strain C58 / ATCC 33970) (Agrobacterium tumefaciens (strain C58)), this protein is Sulfoquinovosyl glycerol-binding protein SmoF.